Here is a 121-residue protein sequence, read N- to C-terminus: UPF0091 protein PH1428 (121 aa).

This sequence belongs to the UPF0091 family.

The chain is UPF0091 protein PH1428 from Pyrococcus horikoshii (strain ATCC 700860 / DSM 12428 / JCM 9974 / NBRC 100139 / OT-3).